The chain runs to 86 residues: MNFKPLGDRLLIQRVEEANTTASGIIIPDNAKEKPSKGKVIAVGSEVEDINVDDTVVFGKYSGNEIILDGEEFLIMESSDIFGILI.

Belongs to the GroES chaperonin family. As to quaternary structure, heptamer of 7 subunits arranged in a ring. Interacts with the chaperonin GroEL.

The protein resides in the cytoplasm. In terms of biological role, together with the chaperonin GroEL, plays an essential role in assisting protein folding. The GroEL-GroES system forms a nano-cage that allows encapsulation of the non-native substrate proteins and provides a physical environment optimized to promote and accelerate protein folding. GroES binds to the apical surface of the GroEL ring, thereby capping the opening of the GroEL channel. In Sulfurovum sp. (strain NBC37-1), this protein is Co-chaperonin GroES.